The chain runs to 308 residues: Ribosomal protein L11 methyltransferase (308 aa).

4 residues coordinate S-adenosyl-L-methionine: T148, G169, D191, and N239.

The protein belongs to the methyltransferase superfamily. PrmA family.

The protein localises to the cytoplasm. The catalysed reaction is L-lysyl-[protein] + 3 S-adenosyl-L-methionine = N(6),N(6),N(6)-trimethyl-L-lysyl-[protein] + 3 S-adenosyl-L-homocysteine + 3 H(+). Its function is as follows. Methylates ribosomal protein L11. The protein is Ribosomal protein L11 methyltransferase of Psychrobacter cryohalolentis (strain ATCC BAA-1226 / DSM 17306 / VKM B-2378 / K5).